We begin with the raw amino-acid sequence, 293 residues long: Lysosomal amino acid transporter 1 homolog (293 aa).

At methionine 1–alanine 37 the chain is on the lumenal side. Residues asparagine 10 and asparagine 16 are each glycosylated (N-linked (GlcNAc...) asparagine). Residues tryptophan 34–tyrosine 100 form the PQ-loop 1 domain. A helical transmembrane segment spans residues serine 38–isoleucine 58. Topologically, residues lysine 59–serine 71 are cytoplasmic. The chain crosses the membrane as a helical span at residues leucine 72–alanine 92. Residues aspartate 93–proline 96 lie on the Lumenal side of the membrane. The helical transmembrane segment at leucine 97–phenylalanine 117 threads the bilayer. Topologically, residues histidine 118–proline 127 are cytoplasmic. Residues leucine 128 to leucine 148 traverse the membrane as a helical segment. The Lumenal portion of the chain corresponds to leucine 149 to valine 182. A helical transmembrane segment spans residues isoleucine 183 to isoleucine 203. A PQ-loop 2 domain is found at serine 191 to glutamine 243. Topologically, residues arginine 204 to glycine 214 are cytoplasmic. Residues isoleucine 215–leucine 235 form a helical membrane-spanning segment. The Lumenal segment spans residues leucine 236–proline 254. A helical transmembrane segment spans residues tryptophan 255–valine 275. Residues tyrosine 276–serine 293 are Cytoplasmic-facing. Positions leucine 290–leucine 291 match the Di-leucine motif motif.

It belongs to the laat-1 family. As to expression, ubiquitously expressed.

Its subcellular location is the lysosome membrane. Amino acid transporter that specifically mediates the pH-dependent export of the cationic amino acids arginine, histidine and lysine from lysosomes. This chain is Lysosomal amino acid transporter 1 homolog, found in Mus musculus (Mouse).